The chain runs to 1049 residues: Isoleucine--tRNA ligase (1049 aa).

The 'HIGH' region motif lies at 48 to 58 (PYTTGRIHLGT). Positions 596-600 (KMSKS) match the 'KMSKS' region motif. Lys599 is a binding site for ATP.

It belongs to the class-I aminoacyl-tRNA synthetase family. IleS type 2 subfamily. As to quaternary structure, monomer. Zn(2+) is required as a cofactor.

It localises to the cytoplasm. It carries out the reaction tRNA(Ile) + L-isoleucine + ATP = L-isoleucyl-tRNA(Ile) + AMP + diphosphate. In terms of biological role, catalyzes the attachment of isoleucine to tRNA(Ile). As IleRS can inadvertently accommodate and process structurally similar amino acids such as valine, to avoid such errors it has two additional distinct tRNA(Ile)-dependent editing activities. One activity is designated as 'pretransfer' editing and involves the hydrolysis of activated Val-AMP. The other activity is designated 'posttransfer' editing and involves deacylation of mischarged Val-tRNA(Ile). The polypeptide is Isoleucine--tRNA ligase (Methanothrix thermoacetophila (strain DSM 6194 / JCM 14653 / NBRC 101360 / PT) (Methanosaeta thermophila)).